We begin with the raw amino-acid sequence, 414 residues long: TAR DNA-binding protein 43 (414 aa).

Residues Lys-79, Lys-84, Lys-95, Lys-102, and Lys-181 each participate in a glycyl lysine isopeptide (Lys-Gly) (interchain with G-Cter in SUMO2) cross-link. RRM domains lie at 104–200 (SDLI…RCTE) and 191–262 (RKVF…NAEP). Ser-183 carries the phosphoserine modification. Positions 216 to 414 (DVMDVFIPKP…MDSKSSGWGM (199 aa)) are interaction with UBQLN2. Basic and acidic residues predominate over residues 261 to 274 (EPKHNSNRQLERSG). Disordered regions lie at residues 261–303 (EPKH…GNNQ) and 341–373 (ASQQ…GNNS). Residue Lys-263 forms a Glycyl lysine isopeptide (Lys-Gly) (interchain with G-Cter in SUMO2) linkage. The span at 275–303 (RFGGNPGGFGNQGGFGNSRGGGAGLGNNQ) shows a compositional bias: gly residues. Residue Ser-292 is modified to Phosphoserine. The residue at position 293 (Arg-293) is an Omega-N-methylarginine. Low complexity predominate over residues 342–358 (SQQNQSGPSGNNQNQGN).

As to quaternary structure, monomer and component of the SFPQ-NONO complex, which is probably a heterotetramer of two 52 kDa (NONO) and two 100 kDa (SFPQ) subunits. NONO is a component of spliceosome and U5.4/6 snRNP complexes. Interacts with CPNE4 (via VWFA domain). Forms heterodimers with PSPC1; this involves formation of a coiled coil domain by helices from both proteins. Part of complex consisting of SFPQ, NONO and MATR3. Part of a complex consisting of SFPQ, NONO and NR5A1. Part of a complex consisting of SFPQ, NONO and TOP1. Interacts with SPI1. Interacts with RNF43. Interacts with PER1 and PER2. Part of the HDP-RNP complex composed of at least HEXIM1, PRKDC, XRCC5, XRCC6, paraspeckle proteins (SFPQ, NONO, PSPC1, RBM14, and MATR3) and NEAT1 RNA. Interacts (via second RRM domain) with WASL; the interaction is direct. Component of a multiprotein complex with WASL and SFPQ. Interacts with ERCC6. Interacts (via DNA-binding domain) with TET1. Post-translationally, hyperphosphorylated. In terms of processing, ubiquitinated.

It localises to the nucleus. Its subcellular location is the nucleolus. The protein localises to the nucleus speckle. The protein resides in the chromosome. It is found in the mitochondrion. Functionally, DNA- and RNA binding protein, involved in several nuclear processes. Binds the conventional octamer sequence in double-stranded DNA. Also binds single-stranded DNA and RNA at a site independent of the duplex site. Involved in pre-mRNA splicing, probably as a heterodimer with SFPQ. Interacts with U5 snRNA, probably by binding to a purine-rich sequence located on the 3' side of U5 snRNA stem 1b. Together with PSPC1, required for the formation of nuclear paraspeckles. The SFPQ-NONO heteromer associated with MATR3 may play a role in nuclear retention of defective RNAs. The SFPQ-NONO heteromer may be involved in DNA unwinding by modulating the function of topoisomerase I/TOP1. The SFPQ-NONO heteromer may be involved in DNA non-homologous end joining (NHEJ) required for double-strand break repair and V(D)J recombination and may stabilize paired DNA ends. In vitro, the complex strongly stimulates DNA end joining, binds directly to the DNA substrates and cooperates with the Ku70/G22P1-Ku80/XRCC5 (Ku) dimer to establish a functional preligation complex. NONO is involved in transcriptional regulation. The SFPQ-NONO-NR5A1 complex binds to the CYP17 promoter and regulates basal and cAMP-dependent transcriptional activity. NONO binds to an enhancer element in long terminal repeats of endogenous intracisternal A particles (IAPs) and activates transcription. Regulates the circadian clock by repressing the transcriptional activator activity of the CLOCK-BMAL1 heterodimer. Important for the functional organization of GABAergic synapses. Plays a specific and important role in the regulation of synaptic RNAs and GPHN/gephyrin scaffold structure, through the regulation of GABRA2 transcript. Plays a key role during neuronal differentiation by recruiting TET1 to genomic loci and thereby regulating 5-hydroxymethylcytosine levels. Plays a role in the regulation of DNA virus-mediated innate immune response by assembling into the HDP-RNP complex, a complex that serves as a platform for IRF3 phosphorylation and subsequent innate immune response activation through the cGAS-STING pathway. The chain is TAR DNA-binding protein 43 (TARDBP) from Pongo abelii (Sumatran orangutan).